The following is a 552-amino-acid chain: Chaperonin GroEL (552 aa).

ATP contacts are provided by residues 29 to 32, Lys-50, 86 to 90, Gly-420, and Asp-501; these read TAGP and DGTTT.

This sequence belongs to the chaperonin (HSP60) family. As to quaternary structure, forms a cylinder of 14 subunits composed of two heptameric rings stacked back-to-back. Interacts with the co-chaperonin GroES.

Its subcellular location is the cytoplasm. It carries out the reaction ATP + H2O + a folded polypeptide = ADP + phosphate + an unfolded polypeptide.. Its function is as follows. Together with its co-chaperonin GroES, plays an essential role in assisting protein folding. The GroEL-GroES system forms a nano-cage that allows encapsulation of the non-native substrate proteins and provides a physical environment optimized to promote and accelerate protein folding. The chain is Chaperonin GroEL from Wolbachia pipientis subsp. Culex pipiens (strain wPip).